The following is a 210-amino-acid chain: uncharacterized protein (210 aa).

A signal peptide spans 1–17 (MKRTAVSLCLLTGLLSG). Residue cysteine 18 is the site of N-palmitoyl cysteine attachment. Cysteine 18 carries the S-diacylglycerol cysteine lipid modification. Over residues 176 to 195 (EMKTSPQGSPVSENENANGE) the composition is skewed to polar residues. The interval 176 to 210 (EMKTSPQGSPVSENENANGETRQDMKIDRNDKNAR) is disordered. The segment covering 196–210 (TRQDMKIDRNDKNAR) has biased composition (basic and acidic residues).

The protein localises to the cell membrane. This is an uncharacterized protein from Bacillus subtilis (strain 168).